The primary structure comprises 229 residues: Adenine nucleotide translocase lysine N-methyltransferase (229 aa).

Residues 1–22 (MDQDDPAEALTELREKRLGLLE) are N-terminal sequence (NTS). A helical transmembrane segment spans residues 20-42 (LLEIVQAAAGSGLAVYTIWALLL). Positions 43 to 77 (QPGFRRVPLRLQVPYVGASARQVENVLSLLRGRPG) are methyltransferase (MTase). A pre-methyltransferase (preMT) region spans residues 43–77 (QPGFRRVPLRLQVPYVGASARQVENVLSLLRGRPG).

Belongs to the ANT/ATPSC lysine N-methyltransferase family.

Its subcellular location is the mitochondrion membrane. The catalysed reaction is L-lysyl-[protein] + 3 S-adenosyl-L-methionine = N(6),N(6),N(6)-trimethyl-L-lysyl-[protein] + 3 S-adenosyl-L-homocysteine + 3 H(+). Its function is as follows. Mitochondrial protein-lysine N-methyltransferase that trimethylates adenine nucleotide translocases ANT2/SLC25A5 and ANT3/SLC25A6, thereby regulating mitochondrial respiration. Probably also trimethylates ANT1/SLC25A4. The chain is Adenine nucleotide translocase lysine N-methyltransferase from Mus musculus (Mouse).